The primary structure comprises 1661 residues: Cortactin-binding protein 2 (1661 aa).

5 disordered regions span residues 1 to 27, 206 to 226, 329 to 438, 454 to 477, and 493 to 612; these read MATDGASCEPDFSRASEDAAEATAEAT, EKKRTNELEEELSTEKRRSTE, TVPV…SLHP, NANDQDQNGNTTQSPPSRDVSPTS, and QALS…LPPK. Residues 124-280 adopt a coiled-coil conformation; it reads KMQERMSTQL…EQLKRGNDSK (157 aa). A compositionally biased stretch (low complexity) spans 383 to 394; the sequence is GPSTGSTPDLPS. A compositionally biased stretch (polar residues) spans 412–426; that stretch reads SIASQNYSQASSLHS. Low complexity predominate over residues 454 to 466; it reads NANDQDQNGNTTQ. Residues 467–477 show a composition bias toward polar residues; the sequence is SPPSRDVSPTS. An Asymmetric dimethylarginine modification is found at Arg-497. 5 ANK repeats span residues 707–737, 741–770, 774–803, 807–836, and 840–869; these read GRPTLLQQAAAQGNVTLLSMLLNEEGLDINY, DGHSALYSAAKNGHTDCVRLLLNAEAQVNA, NGFTPLCAAAAQGHDKCVELLIAYRANINH, GGQTPLYLACKNGNKECIKLLLEAGTDRSV, and DGWTPVHAAVDTGNVDSLKLLMYHRAPACG. Residues 876–896 are disordered; sequence EPESDVFDLDGGGERPEGTVK. The ANK 6 repeat unit spans residues 910–940; the sequence is EGWTAAHIAASKGFKNCLEILCQHGGLEPER. The segment at 1444-1480 is disordered; it reads GKKKGENGAWRKVSTSPRKKSGRFPSPTWSKPDLSDE. Ser-1522 carries the phosphoserine modification. Disordered regions lie at residues 1555–1597 and 1614–1661; these read RRFD…SNSK and PRSK…KPNK. Polar residues predominate over residues 1580 to 1597; sequence KEVSPLSSHQTTECSNSK. Residues 1622-1636 are compositionally biased toward low complexity; the sequence is SQNTRRSSSSSNTRQ. Residues 1643–1661 show a composition bias toward basic and acidic residues; it reads SKDEIWNLRKNEQVEKPNK.

Interacts with CTTN/cortactin SH3 domain. Interacts with STRN, STRN4/zinedin and MOB4/phocein; this interactions mediate the association with the STRIPAK core complex and may regulate dendritic spine distribution of the STRIPAK complex in hippocampal neurons. Activation of glutamate receptors weakens the interaction with STRN and STRN4.

Its subcellular location is the cytoplasm. It localises to the cell cortex. The protein resides in the cell projection. It is found in the dendritic spine. In terms of biological role, regulates the dendritic spine distribution of CTTN/cortactin in hippocampal neurons, and thus controls dendritic spinogenesis and dendritic spine maintenance. Associates with the striatin-interacting phosphatase and kinase (STRIPAK) core complex to regulate dendritic spine distribution of the STRIPAK complex in hippocampal neurons. The chain is Cortactin-binding protein 2 (CTTNBP2) from Loxodonta africana (African elephant).